The following is a 365-amino-acid chain: MAKQTPLYDQHVACGARMVDFHGWMMPLHYGSQIDEHHFVRQDAGMFDVSHMTIVDLHGNRTREFLRYLLANDVAKLTQPGKALYTGMLNESGGVIDDLIVYFLSEDYFRLVVNSATRDKDLAWISQHAEPYQVEVTVRDDLALIAVQGPQAQQKVATLLTTEQQQAIAGMKPFFGIQTGDLFIATTGYTGEAGYEIALPKQQVVAFWQQLLAAGVKPAGLGARDTLRLEAGMNLYGQEMDEKTSPLAANMGWTVAWQPEDRQFIGRAALERQRMKGTEQLVGLIMTEKGVLRNELPVYFFDAAGNQHVGVITSGSFSPTLGFSIALARVPTGIGEHAVVQIRNREMPVRVTKPGFVRAGKAIVL.

It belongs to the GcvT family. As to quaternary structure, the glycine cleavage system is composed of four proteins: P, T, L and H.

The enzyme catalyses N(6)-[(R)-S(8)-aminomethyldihydrolipoyl]-L-lysyl-[protein] + (6S)-5,6,7,8-tetrahydrofolate = N(6)-[(R)-dihydrolipoyl]-L-lysyl-[protein] + (6R)-5,10-methylene-5,6,7,8-tetrahydrofolate + NH4(+). The glycine cleavage system catalyzes the degradation of glycine. In Yersinia pseudotuberculosis serotype O:3 (strain YPIII), this protein is Aminomethyltransferase.